Consider the following 294-residue polypeptide: MFKRSLFILLLLAASLVKAEIIEVDSLNKIKQDFKENYNKNYVPQDLLVVTVLDEFLFKSLVPIGEQIDKDIYLTLTPLLRNINKNSKAIYIDQLILTNDSYKKELQESDFPNFVNEMSNSKIPIIAVNDGFTGNFNNIPKFEIWFADYLKKNFNIDFSNSFPNNNYIIFNNLDSFANTYPVFYKGILTSNNISKAEMMLNFLIQVGFMPKAFIIISNNIELLKSMEFQLNSYSSNILFIGYHYNNKNTPENKDAAYYTKIINDLISQINKIKRNNPPLKTNKIKDKNPYDKNQ.

Residues Met-1 to Ala-19 form the signal peptide.

This is an uncharacterized protein from Rickettsia felis (strain ATCC VR-1525 / URRWXCal2) (Rickettsia azadi).